Here is a 1225-residue protein sequence, read N- to C-terminus: MSSQAEPSKGASNADPNEKVEKMHLPTDTAGGGVKVKVKEQEASPSDKNNLNPQSAGVSEVQVQDDTGARGSGARDLKVPKQMQAPKSSEEKSDVDGVPTRPVSERELRKRDAMQFIQRHQKVRNILAQYCPWLTDERLQLCIELKILFMQHFQDSRLVLYTAVMSFLFGYLRFGFLSLFIIMAVCIQYYRICDRRVKVNFKDDYTRYLSTRKLENDSETVTWLNTFLQQFWYIFEPSLSERITEITDQILSENVPSFIDSMALSEFTLGTKSPRMGFIRSYPKTEEDTVMMDLRLAFSPNDISDLTGREIAACIKPKIALDLKIGKSIASAKMPVLIEDLSFTGNLRVKVKLIDKYPYAKTVGLTFTEKPVFSYILKPLGGDKFGFDIGNIPGLTTFITEQIHNTLGPMMYSPNVYELDIESMMGAAGLNTALGAVEFKLRKGDGFKDGLGGAVDPYVVIKNSADRVIGKSKVAHNTGSPVFNETFYSVLNSFSENLNLEVYDFNDIRSDKLLGSAVLPLATLEAMPVTNDAFVELTLKGKTVGRLNYDMKFHAVVPDSGEEITKVDGPGVLQFTVHQCKELSNDPSKRPTAYAKLIINNKEVYTTRKIKKNNNPSWEESFGTLLPEGKNATLGVQIFTEESEHPFGTANVSLQDLFAATKTGLLWFPLQHAPSGRVRMSVMWKPAQLNNDSISSMALATPIGAIRIHLRSANNLHSKIPGKKCDSYARIMSHNTKQFRTVVIASNVNPFWDEYMYAPVITKHDIFFLQVMNYNSSGEDKLIGQTPINISNFINQGENGALMEYHDPRELTVPLSSTRGIKGNATITFKCDFFPSAVTTSLSPDVTPAPKASSTVATDKVNIEVLPESQKTPTAVDNTSTSRGSTSVKTSKPKKISELLMPSEAVNAALDFESGFMGFDIISYKIAKPAQELAIFLDDLPHHIFLSSALNVTGGATLHEYGNTFIRQLEYSQCTFKLLDGDKEVGSKTMLSRDLISKGATKPLEIAFPDGASILVAFRLTPVPVKLEEVEMYENMGEMTVDVIKATDLPAADSNGKSDPFVVFELQGEEVYRTKTHKRTLNPTFNESFEVELPCKQTCNFVANVFDWDFGNKDDHLGSCVIDCKLLQQQQQTNYEIPLDSKQGVLYLRITLSPKWVLRSKRAGNSSLVEGILGQTASIVGMPLKGISTVGNVAVDGVASVANLTNKMRKGISRGFKGIHHEKAK.

Polar residues predominate over residues 1–15; sequence MSSQAEPSKGASNAD. A disordered region spans residues 1–104; the sequence is MSSQAEPSKG…VDGVPTRPVS (104 aa). A compositionally biased stretch (basic and acidic residues) spans 16-25; that stretch reads PNEKVEKMHL. Residues 43–65 are compositionally biased toward polar residues; sequence ASPSDKNNLNPQSAGVSEVQVQD. A helical transmembrane segment spans residues 167–187; that stretch reads FLFGYLRFGFLSLFIIMAVCI. The SMP-LTD domain maps to 217–422; sequence DSETVTWLNT…SPNVYELDIE (206 aa). C2 domains lie at 413-534, 559-668, and 685-803; these read SPNV…NDAF, DSGE…LLWF, and KPAQ…GALM. At S843 the chain carries Phosphoserine. Positions 867 to 890 are disordered; sequence PESQKTPTAVDNTSTSRGSTSVKT. The segment covering 869 to 890 has biased composition (polar residues); it reads SQKTPTAVDNTSTSRGSTSVKT. The 119-residue stretch at 1019–1137 folds into the C2 4 domain; sequence RLTPVPVKLE…QQQQQTNYEI (119 aa). Residues D1053, D1059, D1107, D1109, and D1115 each contribute to the Ca(2+) site.

The cofactor is Ca(2+).

Its subcellular location is the endoplasmic reticulum membrane. This is an uncharacterized protein from Schizosaccharomyces pombe (strain 972 / ATCC 24843) (Fission yeast).